A 199-amino-acid polypeptide reads, in one-letter code: Dephospho-CoA kinase (199 aa).

The DPCK domain occupies 3–199 (RIGLTGGIGS…HCKYLQIAQT (197 aa)). An ATP-binding site is contributed by 11–16 (GSGKST).

The protein belongs to the CoaE family.

It is found in the cytoplasm. The catalysed reaction is 3'-dephospho-CoA + ATP = ADP + CoA + H(+). Its pathway is cofactor biosynthesis; coenzyme A biosynthesis; CoA from (R)-pantothenate: step 5/5. Its function is as follows. Catalyzes the phosphorylation of the 3'-hydroxyl group of dephosphocoenzyme A to form coenzyme A. This chain is Dephospho-CoA kinase, found in Coxiella burnetii (strain RSA 493 / Nine Mile phase I).